Consider the following 325-residue polypeptide: Glutarate 2-hydroxylase (325 aa).

Fe cation contacts are provided by His160, Asp162, and His292.

It belongs to the glutarate hydroxylase family. Homotetramer. Fe(2+) is required as a cofactor.

It catalyses the reaction glutarate + 2-oxoglutarate + O2 = (S)-2-hydroxyglutarate + succinate + CO2. It participates in amino-acid degradation. Functionally, acts as an alpha-ketoglutarate-dependent dioxygenase catalyzing hydroxylation of glutarate (GA) to L-2-hydroxyglutarate (L2HG). Functions in a L-lysine degradation pathway that proceeds via cadaverine, glutarate and L-2-hydroxyglutarate. This Escherichia fergusonii (strain ATCC 35469 / DSM 13698 / CCUG 18766 / IAM 14443 / JCM 21226 / LMG 7866 / NBRC 102419 / NCTC 12128 / CDC 0568-73) protein is Glutarate 2-hydroxylase.